A 241-amino-acid polypeptide reads, in one-letter code: Uridylate kinase (241 aa).

15–18 is a binding site for ATP; that stretch reads KMSG. Residues 23-28 form an involved in allosteric activation by GTP region; it reads GAEGFG. Position 57 (G57) interacts with UMP. Residues G58 and R62 each contribute to the ATP site. Residues D77 and 138 to 145 each bind UMP; that span reads TGNPLFTT. Residues T165, F171, and D174 each coordinate ATP.

This sequence belongs to the UMP kinase family. Homohexamer.

It is found in the cytoplasm. It carries out the reaction UMP + ATP = UDP + ADP. The protein operates within pyrimidine metabolism; CTP biosynthesis via de novo pathway; UDP from UMP (UMPK route): step 1/1. Allosterically activated by GTP. Inhibited by UTP. In terms of biological role, catalyzes the reversible phosphorylation of UMP to UDP. The polypeptide is Uridylate kinase (Blochmanniella pennsylvanica (strain BPEN)).